Here is a 169-residue protein sequence, read N- to C-terminus: Large ribosomal subunit protein uL10 (169 aa).

Belongs to the universal ribosomal protein uL10 family. As to quaternary structure, part of the ribosomal stalk of the 50S ribosomal subunit. The N-terminus interacts with L11 and the large rRNA to form the base of the stalk. The C-terminus forms an elongated spine to which L12 dimers bind in a sequential fashion forming a multimeric L10(L12)X complex.

Its function is as follows. Forms part of the ribosomal stalk, playing a central role in the interaction of the ribosome with GTP-bound translation factors. This Rickettsia felis (strain ATCC VR-1525 / URRWXCal2) (Rickettsia azadi) protein is Large ribosomal subunit protein uL10.